Here is a 110-residue protein sequence, read N- to C-terminus: Iron-sulfur cluster insertion protein ErpA (110 aa).

Iron-sulfur cluster contacts are provided by Cys-38, Cys-102, and Cys-104.

This sequence belongs to the HesB/IscA family. As to quaternary structure, homodimer. Iron-sulfur cluster is required as a cofactor.

Required for insertion of 4Fe-4S clusters for at least IspG. In Marinobacter nauticus (strain ATCC 700491 / DSM 11845 / VT8) (Marinobacter aquaeolei), this protein is Iron-sulfur cluster insertion protein ErpA.